A 694-amino-acid polypeptide reads, in one-letter code: Follicle-stimulating hormone receptor (694 aa).

The N-terminal stretch at 1–17 (MALLLVSLLAFLSLGSG) is a signal peptide. Cystine bridges form between Cys-18/Cys-25 and Cys-23/Cys-32. Residues 18–46 (CHHRVCHCSNRVFLCQESKVTEIPSDLPR) form the LRRNT domain. The Extracellular portion of the chain corresponds to 18-365 (CHHRVCHCSN…EDIMGYDILR (348 aa)). 9 LRR repeats span residues 49–72 (LELR…FGDL), 73–97 (EKIE…LPKL), 98–118 (HEIR…AFQN), 119–143 (LPNL…KIQS), 144–169 (LQKV…MGLS), 170–192 (FEST…AFNG), 193–216 (TQLD…VFQG), 217–240 (ASGP…GLEN), and 241–259 (LKKL…PSLE). 2 N-linked (GlcNAc...) asparagine glycosylation sites follow: Asn-191 and Asn-199. A glycan (N-linked (GlcNAc...) asparagine) is linked at Asn-268. Cystine bridges form between Cys-275–Cys-345, Cys-276–Cys-292, Cys-276–Cys-355, and Cys-292–Cys-337. Asn-293 carries an N-linked (GlcNAc...) asparagine glycan. Tyr-334 is modified (sulfotyrosine). Residues 366–386 (VLIWFISILAITGNIIVLVIL) traverse the membrane as a helical segment. Residues 387–397 (ITSQYKLTVPR) lie on the Cytoplasmic side of the membrane. Residues 398–420 (FLMCNLAFADLCIGIYLLLIASV) traverse the membrane as a helical segment. Residues 421-442 (DIHTKSQYHNYAIDWQTGAGCD) lie on the Extracellular side of the membrane. A disulfide bond links Cys-441 and Cys-516. The chain crosses the membrane as a helical span at residues 443 to 464 (AAGFFTVFASELSVYTLTAITL). The Cytoplasmic segment spans residues 465-484 (ERWHTITHAMQLECKVQLRH). Residues 485 to 507 (AASVMLVGWIFAFAVALLPIFGI) traverse the membrane as a helical segment. Residues 508-527 (STYMKVSICLPMDIDSPLSQ) lie on the Extracellular side of the membrane. Residues 528 to 549 (LYVMSLLVLNVLAFVVICGCYI) traverse the membrane as a helical segment. The Cytoplasmic segment spans residues 550–572 (HIYLTVRNPNIVSSSSDTKIAKR). Residues 573–596 (MAILIFTDFLCMAPISFFAISASL) form a helical membrane-spanning segment. At 597 to 607 (KVPLITVSKSK) the chain is on the extracellular side. Residues 608 to 629 (ILLVLFYPINSCANPFLYAIFT) traverse the membrane as a helical segment. The Cytoplasmic segment spans residues 630 to 694 (KNFRRDFFIL…LVPLSHLAQN (65 aa)).

Belongs to the G-protein coupled receptor 1 family. FSH/LSH/TSH subfamily. Homotrimer. Functions as a homotrimer binding the FSH hormone heterodimer composed of CGA and FSHB. Interacts with ARRB2. Interacts with APPL2; interaction is independent of follicle stimulating hormone stimulation. Post-translationally, N-glycosylated; indirectly required for FSH-binding, possibly via a conformational change that allows high affinity binding of hormone. Sulfated.

It is found in the cell membrane. Functionally, g protein-coupled receptor for follitropin, the follicle-stimulating hormone. Through cAMP production activates the downstream PI3K-AKT and ERK1/ERK2 signaling pathways. The sequence is that of Follicle-stimulating hormone receptor (FSHR) from Equus caballus (Horse).